Here is a 37-residue protein sequence, read N- to C-terminus: Large ribosomal subunit protein bL36 (37 aa).

It belongs to the bacterial ribosomal protein bL36 family.

This is Large ribosomal subunit protein bL36 from Geobacter sp. (strain M21).